The following is a 301-amino-acid chain: uncharacterized protein (301 aa).

Catalysis depends on charge relay system residues serine 44 and tyrosine 107. Tyrosine 133 serves as the catalytic Proton donor. Lysine 162 serves as the catalytic Schiff-base intermediate with substrate.

It belongs to the DapA family. In terms of assembly, homotetramer.

It is found in the cytoplasm. This is an uncharacterized protein from Pyrobaculum aerophilum (strain ATCC 51768 / DSM 7523 / JCM 9630 / CIP 104966 / NBRC 100827 / IM2).